The following is a 475-amino-acid chain: Putative amidase AmiD (475 aa).

Catalysis depends on charge relay system residues Lys-93 and Ser-166. Ser-190 functions as the Acyl-ester intermediate in the catalytic mechanism.

The protein belongs to the amidase family.

It carries out the reaction a monocarboxylic acid amide + H2O = a monocarboxylate + NH4(+). The protein is Putative amidase AmiD (amiD) of Mycobacterium bovis (strain ATCC BAA-935 / AF2122/97).